The sequence spans 265 residues: MSGTRCLLGVGLPVDVTATETLTHDEQGPGVEPGPCSRGSSIDGLLPSLLGPHDDVDDDSAAFHKYMTLSRDGAGAIHAPSLVEDASRNDDDDDDEDDDDSSMSRDLSKALDMSSSSSSSPRVQSRRHRSSVSAISAILHQGKSGREDITGSLSVPAEQEKLSFLAKASSIFFRRNSMPRDKHTHSVCPASRPDSERFIVTSAAAQSLRRQQQLEDAQYARVITNFRTIGWCSPSEIESVEYKRSLINAEWDEKISLLSHAQCYK.

2 disordered regions span residues 21–53 (TLTH…LGPH) and 78–133 (HAPS…SSVS). Residues 90 to 101 (DDDDDDEDDDDS) show a composition bias toward acidic residues. A compositionally biased stretch (low complexity) spans 114 to 123 (SSSSSSSPRV). Residue 137-144 (AILHQGKS) coordinates ATP.

This is an uncharacterized protein from Saccharomyces cerevisiae (strain ATCC 204508 / S288c) (Baker's yeast).